Consider the following 246-residue polypeptide: Ubiquinone biosynthesis O-methyltransferase (246 aa).

Arg40, Gly70, Asp91, and Met135 together coordinate S-adenosyl-L-methionine.

Belongs to the methyltransferase superfamily. UbiG/COQ3 family.

The enzyme catalyses a 3-demethylubiquinol + S-adenosyl-L-methionine = a ubiquinol + S-adenosyl-L-homocysteine + H(+). The catalysed reaction is a 3-(all-trans-polyprenyl)benzene-1,2-diol + S-adenosyl-L-methionine = a 2-methoxy-6-(all-trans-polyprenyl)phenol + S-adenosyl-L-homocysteine + H(+). Its pathway is cofactor biosynthesis; ubiquinone biosynthesis. Functionally, O-methyltransferase that catalyzes the 2 O-methylation steps in the ubiquinone biosynthetic pathway. In Colwellia psychrerythraea (strain 34H / ATCC BAA-681) (Vibrio psychroerythus), this protein is Ubiquinone biosynthesis O-methyltransferase.